The primary structure comprises 411 residues: Bifunctional protein GlmU (411 aa).

The interval Met1–Asn204 is pyrophosphorylase. Residues Leu6–Gly9, Gln74, and Gly79 contribute to the UTP site. Residues Thr80, Gly132, Glu144, and Asn158 each coordinate N-acetyl-alpha-D-glucosamine 1-phosphate. A linker region spans residues Gly205–Leu224. Positions Lys225–Lys411 are N-acetyltransferase. Residue His308 is the Proton acceptor of the active site. Acetyl-CoA-binding residues include Ala384 and Lys401.

This sequence in the N-terminal section; belongs to the N-acetylglucosamine-1-phosphate uridyltransferase family. In the C-terminal section; belongs to the transferase hexapeptide repeat family.

The catalysed reaction is N-acetyl-alpha-D-glucosamine 1-phosphate + UTP + H(+) = UDP-N-acetyl-alpha-D-glucosamine + diphosphate. The enzyme catalyses alpha-D-glucosamine 1-phosphate + acetyl-CoA = N-acetyl-alpha-D-glucosamine 1-phosphate + CoA + H(+). It functions in the pathway nucleotide-sugar biosynthesis; UDP-N-acetyl-alpha-D-glucosamine biosynthesis; N-acetyl-alpha-D-glucosamine 1-phosphate from alpha-D-glucosamine 6-phosphate (route II): step 2/2. The protein operates within nucleotide-sugar biosynthesis; UDP-N-acetyl-alpha-D-glucosamine biosynthesis; UDP-N-acetyl-alpha-D-glucosamine from N-acetyl-alpha-D-glucosamine 1-phosphate: step 1/1. Functionally, catalyzes the last two sequential reactions in the de novo biosynthetic pathway for UDP-N-acetyl-glucosamine (UDP-GlcNAc). Responsible for the acetylation of GlcN-1-P to GlcNAc-1-P, and for the uridyl transfer from UTP to GlcNAc-1-P, to produce UDP-GlcNAc and pyrophosphate. In Methanococcus aeolicus (strain ATCC BAA-1280 / DSM 17508 / OCM 812 / Nankai-3), this protein is Bifunctional protein GlmU.